A 305-amino-acid polypeptide reads, in one-letter code: D-alanine--D-alanine ligase (305 aa).

The 202-residue stretch at 99-300 folds into the ATP-grasp domain; sequence KLFFEKAGIR…YEEMIQTFVN (202 aa). An ATP-binding site is contributed by 126–181; sequence NFTGTYPVVVKPNQEGSTIGLTVAETEEELLQGIEEAFRHDDTILIEEFIAGTEVT.

The protein belongs to the D-alanine--D-alanine ligase family.

It localises to the cytoplasm. It catalyses the reaction 2 D-alanine + ATP = D-alanyl-D-alanine + ADP + phosphate + H(+). It functions in the pathway cell wall biogenesis; peptidoglycan biosynthesis. Its function is as follows. Cell wall formation. The sequence is that of D-alanine--D-alanine ligase from Halalkalibacterium halodurans (strain ATCC BAA-125 / DSM 18197 / FERM 7344 / JCM 9153 / C-125) (Bacillus halodurans).